The sequence spans 106 residues: Thioredoxin (106 aa).

Residues 2–106 form the Thioredoxin domain; sequence VQVISNLDEF…LESLVQKSLA (105 aa). Catalysis depends on nucleophile residues Cys30 and Cys33. The cysteines at positions 30 and 33 are disulfide-linked.

It belongs to the thioredoxin family.

Functionally, participates in various redox reactions through the reversible oxidation of its active center dithiol to a disulfide and catalyzes dithiol-disulfide exchange reactions. The chain is Thioredoxin from Coprinus comatus (Shaggy mane).